The chain runs to 425 residues: Inositol hexakisphosphate kinase 2 (425 aa).

ATP is bound by residues 206–208 (ENL) and Asp-219. Substrate contacts are provided by residues 215 to 223 (PCVLDLKMG), Lys-221, and 235 to 242 (KAANQIRK). Asp-382 provides a ligand contact to ATP. A substrate-binding site is contributed by His-385.

It belongs to the inositol phosphokinase (IPK) family. As to expression, highly expressed in small intestine.

It is found in the nucleus. It catalyses the reaction 1D-myo-inositol hexakisphosphate + ATP = 5-diphospho-1D-myo-inositol 1,2,3,4,6-pentakisphosphate + ADP. The protein operates within phospholipid metabolism; phosphatidylinositol metabolism. Converts inositol hexakisphosphate (InsP6) to diphosphoinositol pentakisphosphate (InsP7/PP-InsP5). The polypeptide is Inositol hexakisphosphate kinase 2 (Ip6k2) (Rattus norvegicus (Rat)).